The following is a 248-amino-acid chain: Triosephosphate isomerase (248 aa).

Residue 9–11 participates in substrate binding; that stretch reads NWK. H93 (electrophile) is an active-site residue. Catalysis depends on E163, which acts as the Proton acceptor. Residues G169, S208, and 229–230 contribute to the substrate site; that span reads GG.

Belongs to the triosephosphate isomerase family. Homodimer.

The protein localises to the cytoplasm. It catalyses the reaction D-glyceraldehyde 3-phosphate = dihydroxyacetone phosphate. It functions in the pathway carbohydrate biosynthesis; gluconeogenesis. It participates in carbohydrate degradation; glycolysis; D-glyceraldehyde 3-phosphate from glycerone phosphate: step 1/1. In terms of biological role, involved in the gluconeogenesis. Catalyzes stereospecifically the conversion of dihydroxyacetone phosphate (DHAP) to D-glyceraldehyde-3-phosphate (G3P). This chain is Triosephosphate isomerase, found in Jannaschia sp. (strain CCS1).